A 495-amino-acid chain; its full sequence is Trimethylamine methyltransferase MttB (495 aa).

Residue Pyl334 is a non-standard amino acid, pyrrolysine.

The protein belongs to the trimethylamine methyltransferase family. As to quaternary structure, can form a complex with MttC.

The catalysed reaction is Co(I)-[trimethylamine-specific corrinoid protein] + trimethylamine + H(+) = methyl-Co(III)-[trimethylamine-specific corrinoid protein] + dimethylamine. It functions in the pathway one-carbon metabolism; methanogenesis from trimethylamine. In terms of biological role, catalyzes the transfer of a methyl group from trimethylamine to the corrinoid cofactor of MttC. The sequence is that of Trimethylamine methyltransferase MttB from Methanosarcina barkeri.